A 201-amino-acid chain; its full sequence is Ubiquitin-conjugating enzyme E2 E2 (201 aa).

The segment covering 1–10 (MSTEAQRVDD) has biased composition (basic and acidic residues). Residues 1–55 (MSTEAQRVDDSPSTSGGSSDGDQRESVQQEPDREQVQPKKKEGKISSKTAAKLST) are disordered. N-acetylserine is present on S2. A phosphoserine mark is found at S11, S15, S18, and S19. Over residues 21–45 (GDQRESVQQEPDREQVQPKKKEGKI) the composition is skewed to basic and acidic residues. The span at 46-55 (SSKTAAKLST) shows a compositional bias: low complexity. The 147-residue stretch at 55-201 (TSAKRIQKEL…ARQWTKRYAT (147 aa)) folds into the UBC core domain. Catalysis depends on C139, which acts as the Glycyl thioester intermediate.

It belongs to the ubiquitin-conjugating enzyme family. In terms of processing, autoubiquitinated.

The enzyme catalyses S-ubiquitinyl-[E1 ubiquitin-activating enzyme]-L-cysteine + [E2 ubiquitin-conjugating enzyme]-L-cysteine = [E1 ubiquitin-activating enzyme]-L-cysteine + S-ubiquitinyl-[E2 ubiquitin-conjugating enzyme]-L-cysteine.. Its pathway is protein modification; protein ubiquitination. Its function is as follows. Accepts ubiquitin from the E1 complex and catalyzes its covalent attachment to other proteins. In vitro catalyzes 'Lys-11'- and 'Lys-48'-, as well as 'Lys-63'-linked polyubiquitination. Catalyzes the ISGylation of influenza A virus NS1 protein. The polypeptide is Ubiquitin-conjugating enzyme E2 E2 (Ube2e2) (Mus musculus (Mouse)).